The chain runs to 245 residues: DNA repair protein RecO (245 aa).

It belongs to the RecO family.

Its function is as follows. Involved in DNA repair and RecF pathway recombination. The protein is DNA repair protein RecO of Bartonella bacilliformis (strain ATCC 35685 / KC583 / Herrer 020/F12,63).